A 248-amino-acid chain; its full sequence is tRNA (guanine-N(1)-)-methyltransferase (248 aa).

S-adenosyl-L-methionine is bound by residues Gly-113 and 133–138 (IGDYVL). Residues 226-248 (ARPAQTIRAKGESQKTPKNKTDG) form a disordered region. Residues 234–248 (AKGESQKTPKNKTDG) show a composition bias toward basic and acidic residues.

The protein belongs to the RNA methyltransferase TrmD family. Homodimer.

The protein localises to the cytoplasm. The enzyme catalyses guanosine(37) in tRNA + S-adenosyl-L-methionine = N(1)-methylguanosine(37) in tRNA + S-adenosyl-L-homocysteine + H(+). In terms of biological role, specifically methylates guanosine-37 in various tRNAs. The chain is tRNA (guanine-N(1)-)-methyltransferase from Rhodopseudomonas palustris (strain ATCC BAA-98 / CGA009).